A 404-amino-acid polypeptide reads, in one-letter code: Schlafen-like protein 1 (404 aa).

2 disordered regions span residues 1–31 and 139–170; these read MTPM…LPTE and GPLS…AWPT. The segment covering 7 to 16 has biased composition (polar residues); sequence SVQTQVSEPF. Residues 152-165 are compositionally biased toward low complexity; it reads GLSPGPNPGSGVPL. 258–265 contacts ATP; sequence GVEDSGLV. A coiled-coil region spans residues 365-395; it reads RWLVELGKLEERVKVLTMEKEQLQQQLQQHG.

The protein belongs to the Schlafen family. Subgroup I subfamily.

The sequence is that of Schlafen-like protein 1 (SLFNL1) from Macaca fascicularis (Crab-eating macaque).